Here is a 277-residue protein sequence, read N- to C-terminus: Transcription factor WRKY19 (277 aa).

The WRKY DNA-binding region spans 100–168 (QDTASLDDGL…YLGDHTCGQA (69 aa)).

This sequence belongs to the WRKY group III family.

It is found in the nucleus. May play a role in defense responses. This chain is Transcription factor WRKY19, found in Oryza sativa subsp. japonica (Rice).